Reading from the N-terminus, the 79-residue chain is ATP synthase subunit c (79 aa).

A run of 2 helical transmembrane segments spans residues 11–31 (MAAA…IGIL) and 53–73 (FFIV…LGLY).

This sequence belongs to the ATPase C chain family. F-type ATPases have 2 components, F(1) - the catalytic core - and F(0) - the membrane proton channel. F(1) has five subunits: alpha(3), beta(3), gamma(1), delta(1), epsilon(1). F(0) has three main subunits: a(1), b(2) and c(10-14). The alpha and beta chains form an alternating ring which encloses part of the gamma chain. F(1) is attached to F(0) by a central stalk formed by the gamma and epsilon chains, while a peripheral stalk is formed by the delta and b chains.

The protein localises to the cell inner membrane. Its function is as follows. F(1)F(0) ATP synthase produces ATP from ADP in the presence of a proton or sodium gradient. F-type ATPases consist of two structural domains, F(1) containing the extramembraneous catalytic core and F(0) containing the membrane proton channel, linked together by a central stalk and a peripheral stalk. During catalysis, ATP synthesis in the catalytic domain of F(1) is coupled via a rotary mechanism of the central stalk subunits to proton translocation. Functionally, key component of the F(0) channel; it plays a direct role in translocation across the membrane. A homomeric c-ring of between 10-14 subunits forms the central stalk rotor element with the F(1) delta and epsilon subunits. The sequence is that of ATP synthase subunit c from Yersinia enterocolitica serotype O:8 / biotype 1B (strain NCTC 13174 / 8081).